The sequence spans 168 residues: MPRSQINGNFIDKTFSIVANILLRIIPTTSGEREAFTYYRDGMSAQSEGNYAEALQNYYEAMRLEIDPYDRSYILYNIGLIHTSNGEHTKALEYYFRALERNPFLPQAFNNMAVICHYRGEQAIRQGDSEIAEAWFDQAAEYWKQAISLTPGNYIEAHNWLKITGRFG.

TPR repeat units follow at residues 35-68 (AFTY…EIDP), 72-105 (SYIL…NPFL), and 120-153 (GEQA…TPGN).

This sequence belongs to the Ycf3 family.

It localises to the plastid. Its subcellular location is the chloroplast thylakoid membrane. Functionally, essential for the assembly of the photosystem I (PSI) complex. May act as a chaperone-like factor to guide the assembly of the PSI subunits. This is Photosystem I assembly protein Ycf3 from Coffea arabica (Arabian coffee).